The sequence spans 550 residues: Hydroxylamine reductase (550 aa).

Residues Cys-3, Cys-6, Cys-18, and Cys-25 each contribute to the [2Fe-2S] cluster site. Residues His-249, Glu-273, Cys-317, Cys-405, Cys-433, Cys-458, Glu-492, and Lys-494 each coordinate hybrid [4Fe-2O-2S] cluster. Cys-405 carries the cysteine persulfide modification.

The protein belongs to the HCP family. It depends on [2Fe-2S] cluster as a cofactor. The cofactor is hybrid [4Fe-2O-2S] cluster.

The protein resides in the cytoplasm. It carries out the reaction A + NH4(+) + H2O = hydroxylamine + AH2 + H(+). Functionally, catalyzes the reduction of hydroxylamine to form NH(3) and H(2)O. This Escherichia coli O6:H1 (strain CFT073 / ATCC 700928 / UPEC) protein is Hydroxylamine reductase.